Reading from the N-terminus, the 204-residue chain is Large ribosomal subunit protein bL25 (204 aa).

Belongs to the bacterial ribosomal protein bL25 family. CTC subfamily. In terms of assembly, part of the 50S ribosomal subunit; part of the 5S rRNA/L5/L18/L25 subcomplex. Contacts the 5S rRNA. Binds to the 5S rRNA independently of L5 and L18.

This is one of the proteins that binds to the 5S RNA in the ribosome where it forms part of the central protuberance. This chain is Large ribosomal subunit protein bL25, found in Pseudomonas syringae pv. syringae (strain B728a).